The chain runs to 406 residues: LIM/homeobox protein Lhx1 (406 aa).

LIM zinc-binding domains follow at residues 4–54 (CAGC…CKND) and 63–117 (CAGC…CKED). Disordered regions lie at residues 128–189 (NSLH…TIKA) and 294–372 (DFFP…SAEV). Over residues 137–148 (SDPSLSPDSQDP) the composition is skewed to low complexity. Positions 151-167 (DDAKDSESANVSDKEGG) are enriched in basic and acidic residues. A Phosphoserine modification is found at Ser-162. The homeobox DNA-binding region spans 180–239 (RRGPRTTIKAKQLETLKAAFAATPKPTRHIREQLAQETGLNMRVIQVWFQNRRSKERRMK). Over residues 315 to 327 (PSSGPSGTPLGGL) the composition is skewed to low complexity. A compositionally biased stretch (pro residues) spans 352 to 362 (GDSPSPEPSLP).

Interacts with LDB1 via the tandem LIM domains.

The protein localises to the nucleus. Potential transcription factor. May play a role in early mesoderm formation and later in lateral mesoderm differentiation and neurogenesis. The protein is LIM/homeobox protein Lhx1 (Lhx1) of Mesocricetus auratus (Golden hamster).